Reading from the N-terminus, the 162-residue chain is 2-C-methyl-D-erythritol 2,4-cyclodiphosphate synthase (162 aa).

A divalent metal cation contacts are provided by aspartate 10 and histidine 12. 4-CDP-2-C-methyl-D-erythritol 2-phosphate is bound by residues 10 to 12 (DVH) and 36 to 37 (HS). Histidine 44 contacts a divalent metal cation. 4-CDP-2-C-methyl-D-erythritol 2-phosphate is bound by residues 58–60 (DIG), 63–67 (FPDTD), 102–108 (AQAPKMA), 134–137 (TTTE), phenylalanine 141, and arginine 144.

Belongs to the IspF family. In terms of assembly, homotrimer. It depends on a divalent metal cation as a cofactor.

It carries out the reaction 4-CDP-2-C-methyl-D-erythritol 2-phosphate = 2-C-methyl-D-erythritol 2,4-cyclic diphosphate + CMP. Its pathway is isoprenoid biosynthesis; isopentenyl diphosphate biosynthesis via DXP pathway; isopentenyl diphosphate from 1-deoxy-D-xylulose 5-phosphate: step 4/6. Functionally, involved in the biosynthesis of isopentenyl diphosphate (IPP) and dimethylallyl diphosphate (DMAPP), two major building blocks of isoprenoid compounds. Catalyzes the conversion of 4-diphosphocytidyl-2-C-methyl-D-erythritol 2-phosphate (CDP-ME2P) to 2-C-methyl-D-erythritol 2,4-cyclodiphosphate (ME-CPP) with a corresponding release of cytidine 5-monophosphate (CMP). The sequence is that of 2-C-methyl-D-erythritol 2,4-cyclodiphosphate synthase from Pseudoalteromonas atlantica (strain T6c / ATCC BAA-1087).